A 136-amino-acid polypeptide reads, in one-letter code: Large ribosomal subunit protein uL16 (136 aa).

It belongs to the universal ribosomal protein uL16 family. Part of the 50S ribosomal subunit.

Functionally, binds 23S rRNA and is also seen to make contacts with the A and possibly P site tRNAs. In Shewanella pealeana (strain ATCC 700345 / ANG-SQ1), this protein is Large ribosomal subunit protein uL16.